The primary structure comprises 255 residues: Phycoerythrobilin:ferredoxin oxidoreductase (255 aa).

This sequence belongs to the HY2 family.

The enzyme catalyses (3Z)-phycoerythrobilin + oxidized 2[4Fe-4S]-[ferredoxin] = 15,16-dihydrobiliverdin + reduced 2[4Fe-4S]-[ferredoxin] + 2 H(+). Catalyzes the two-electron reduction of the C2 and C3(1) diene system of 15,16-dihydrobiliverdin. This chain is Phycoerythrobilin:ferredoxin oxidoreductase (pebB), found in Nostoc punctiforme (strain ATCC 29133 / PCC 73102).